The chain runs to 381 residues: Cytochrome b (381 aa).

4 helical membrane-spanning segments follow: residues 34-54 (FGSL…FLAM), 78-99 (WLIR…YLHI), 114-134 (WNIG…GYVL), and 179-199 (FFAF…IHLL). Heme b is bound by residues H84 and H98. Positions 183 and 197 each coordinate heme b. Residue H202 coordinates a ubiquinone. A run of 4 helical transmembrane segments spans residues 227 to 247 (YKDL…ALFM), 289 to 309 (LGGV…PLLH), 321 to 341 (LTQI…WIGG), and 348 to 368 (FITV…IIMP).

The protein belongs to the cytochrome b family. The cytochrome bc1 complex contains 3 respiratory subunits (MT-CYB, CYC1 and UQCRFS1), 2 core proteins (UQCRC1 and UQCRC2) and probably 6 low-molecular weight proteins. Heme b is required as a cofactor.

It localises to the mitochondrion inner membrane. Component of the ubiquinol-cytochrome c reductase complex (complex III or cytochrome b-c1 complex) that is part of the mitochondrial respiratory chain. The b-c1 complex mediates electron transfer from ubiquinol to cytochrome c. Contributes to the generation of a proton gradient across the mitochondrial membrane that is then used for ATP synthesis. In Sphyrna lewini (Scalloped hammerhead shark), this protein is Cytochrome b (mt-cyb).